The following is a 615-amino-acid chain: Sodium-dependent neutral amino acid transporter B(0)AT3 (615 aa).

Over 1-26 (MAQASGMDPLVDIEDERPKWDNKLQY) the chain is Cytoplasmic. The helical transmembrane segment at 27–47 (LLSCIGFAVGLGNIWRFPYLC) threads the bilayer. At 48 to 52 (HTHGG) the chain is on the extracellular side. A helical membrane pass occupies residues 53-73 (GAFLIPYFIALVFEGIPLFYI). At 74–105 (ELAIGQRLRRGSIGVWKTISPYLGGVGLGCFS) the chain is on the cytoplasmic side. The chain crosses the membrane as a helical span at residues 106–126 (VSFLVSLYYNTILLWVLWFFL). Residues 127–177 (NSFQHPLPWSTCPLDLNRTGFVQECQSSGTVSYFWYRQTLNITSDISNTGT) are Extracellular-facing. N-linked (GlcNAc...) asparagine glycans are attached at residues Asn-143 and Asn-167. The helical transmembrane segment at 178 to 198 (IQWKLFLCLVACWTTVYLCVI) threads the bilayer. At 199 to 206 (RGIESTGK) the chain is on the cytoplasmic side. A helical transmembrane segment spans residues 207–227 (VIYFTALFPYLVLTIFLIRGL). Residues 228–255 (TLPGATEGLTYLFTPNMKILQNSRVWLD) are Extracellular-facing. The chain crosses the membrane as a helical span at residues 256–276 (AATQIFFSLSLAFGGHIAFAS). Over 277-290 (YNQPRNNCEKDAVT) the chain is Cytoplasmic. The helical transmembrane segment at 291-311 (IALVNSMTSLYASITIFSIMG) threads the bilayer. At 312 to 397 (FKASNDYGRC…FTEAVLHMPG (86 aa)) the chain is on the extracellular side. An N-linked (GlcNAc...) asparagine glycan is attached at Asn-353. A helical membrane pass occupies residues 398–418 (ASVWSVLFFGMLFTLGLSSMF). Residues 419–442 (GNMEGVITPLFDMGILPKGVPKET) are Cytoplasmic-facing. The chain crosses the membrane as a helical span at residues 443–463 (MTGVVCFICFLSAICFTLQSG). At 464–472 (SYWLEIFDS) the chain is on the extracellular side. Residues 473-493 (FAASLNLIIFAFMEVVGVIHV) form a helical membrane-spanning segment. Topologically, residues 494–520 (YGIKRFCDDIEWMTGRRPSLYWQVTWR) are cytoplasmic. Residues 521–541 (VVSPMLLFGIFLSYIVLLAQS) form a helical membrane-spanning segment. At 542-571 (SPSYKAWNPQYEHFPSREEKLYPGWVQVTC) the chain is on the extracellular side. Residues 572-592 (VLLSFLPSLWVPGIALAQLLF) form a helical membrane-spanning segment. Over 593-615 (QYRQRWKNTHLESALKPQESRGC) the chain is Cytoplasmic.

This sequence belongs to the sodium:neurotransmitter symporter (SNF) (TC 2.A.22) family. SLC6A18 subfamily. Interacts with CLTRN; this interaction regulates the trafficking of SLC6A18 to the cell membrane and its activity. Kidney-specific expression.

Its subcellular location is the apical cell membrane. The protein resides in the cell membrane. It carries out the reaction L-alanine(out) + chloride(out) + 2 Na(+)(out) = L-alanine(in) + chloride(in) + 2 Na(+)(in). The catalysed reaction is glycine(out) + chloride(out) + 2 Na(+)(out) = glycine(in) + chloride(in) + 2 Na(+)(in). The enzyme catalyses L-methionine(out) + chloride(out) + 2 Na(+)(out) = L-methionine(in) + chloride(in) + 2 Na(+)(in). It catalyses the reaction L-valine(out) + chloride(out) + 2 Na(+)(out) = L-valine(in) + chloride(in) + 2 Na(+)(in). It carries out the reaction L-isoleucine(out) + chloride(out) + 2 Na(+)(out) = L-isoleucine(in) + chloride(in) + 2 Na(+)(in). The catalysed reaction is L-serine(out) + chloride(out) + 2 Na(+)(out) = L-serine(in) + chloride(in) + 2 Na(+)(in). The enzyme catalyses L-leucine(out) + chloride(out) + 2 Na(+)(out) = L-leucine(in) + chloride(in) + 2 Na(+)(in). Symporter that transports one amino acid molecule together with two sodium and one chloride ions in kidneys and plays a role in the neutral amino acids reabsorption. Preferentially transports neutral amino acids such as L-glycine and L-alanine but also other neutral amino acids. Required CLTRN for cell surface expression and for its amino acid transporter activity. The transport mechanism is pH-independent. This chain is Sodium-dependent neutral amino acid transporter B(0)AT3, found in Rattus norvegicus (Rat).